The chain runs to 273 residues: UPF0380 protein YafZ (273 aa).

The protein belongs to the UPF0380 family.

The chain is UPF0380 protein YafZ (yafZ) from Escherichia coli (strain K12).